The primary structure comprises 142 residues: Large-conductance mechanosensitive channel (142 aa).

3 consecutive transmembrane segments (helical) span residues 10–30, 40–60, and 86–106; these read FAVK…GAFG, LIMP…LFIV, and GNFI…FVMV.

Belongs to the MscL family. As to quaternary structure, homopentamer.

Its subcellular location is the cell inner membrane. Channel that opens in response to stretch forces in the membrane lipid bilayer. May participate in the regulation of osmotic pressure changes within the cell. The protein is Large-conductance mechanosensitive channel of Acidovorax ebreus (strain TPSY) (Diaphorobacter sp. (strain TPSY)).